The sequence spans 335 residues: Glyceraldehyde-3-phosphate dehydrogenase (335 aa).

Residues 12 to 13 (RI), aspartate 34, arginine 78, and serine 120 contribute to the NAD(+) site. D-glyceraldehyde 3-phosphate contacts are provided by residues 151 to 153 (SCT) and threonine 182. Cysteine 152 acts as the Nucleophile in catalysis. Asparagine 183 lines the NAD(+) pocket. D-glyceraldehyde 3-phosphate contacts are provided by residues arginine 197, 210–211 (TG), and arginine 233. Asparagine 315 serves as a coordination point for NAD(+).

This sequence belongs to the glyceraldehyde-3-phosphate dehydrogenase family. Homotetramer.

It localises to the cytoplasm. It catalyses the reaction D-glyceraldehyde 3-phosphate + phosphate + NAD(+) = (2R)-3-phospho-glyceroyl phosphate + NADH + H(+). It functions in the pathway carbohydrate degradation; glycolysis; pyruvate from D-glyceraldehyde 3-phosphate: step 1/5. Catalyzes the oxidative phosphorylation of glyceraldehyde 3-phosphate (G3P) to 1,3-bisphosphoglycerate (BPG) using the cofactor NAD. The first reaction step involves the formation of a hemiacetal intermediate between G3P and a cysteine residue, and this hemiacetal intermediate is then oxidized to a thioester, with concomitant reduction of NAD to NADH. The reduced NADH is then exchanged with the second NAD, and the thioester is attacked by a nucleophilic inorganic phosphate to produce BPG. The protein is Glyceraldehyde-3-phosphate dehydrogenase (gap) of Priestia megaterium (strain DSM 319 / IMG 1521) (Bacillus megaterium).